A 601-amino-acid chain; its full sequence is Kelch-like ECH-associated protein 1A (601 aa).

The BTB domain occupies 44–117 (MDELRHHEML…VISRLIDFAY (74 aa)). The region spanning 153 to 253 (KNLEPSNVIG…LNAVHIYALP (101 aa)) is the BACK domain. Kelch repeat units lie at residues 292 to 337 (PTPH…PCSG), 338 to 388 (LGAC…PRNR), 389 to 435 (VGVG…ARLG), 436 to 482 (AGVA…VRSG), 484 to 529 (GVVC…CRSA), and 530 to 576 (HGVS…GRSG).

It belongs to the KEAP1 family. As to quaternary structure, homodimer and heterodimer; heterodimerizes with keap1b. Component of the BCR(KEAP1) E3 ubiquitin ligase complex, at least composed of 2 molecules of cul3, 2 molecules of keap1 (keap1a and/or keap1b), and rbx1. Interacts with nfe2l2/nrf2; the interaction is direct. Post-translationally, non-enzymatic covalent modifications of reactive cysteines by electrophile metabolites inactivate the BCR(KEAP1) complex. In terms of tissue distribution, widely expressed.

The protein resides in the cytoplasm. Its subcellular location is the nucleus. The protein operates within protein modification; protein ubiquitination. Its activity is regulated as follows. Ubiquitin ligase activity of the BCR(KEAP1) complex is inhibited by oxidative stress and electrophile metabolites such as sulforaphane. Electrophile metabolites react with reactive cysteine residues in keap1 and trigger non-enzymatic covalent modifications of these cysteine residues, leading to inactivate the ubiquitin ligase activity of the BCR(KEAP1) complex. Functionally, substrate-specific adapter of a BCR (BTB-CUL3-RBX1) E3 ubiquitin ligase complex that regulates the response to oxidative stress by targeting nfe2l2/nrf2 for ubiquitination. Keap1 acts as a key sensor of oxidative and electrophilic stress: in normal conditions, the BCR(KEAP1) complex mediates ubiquitination and degradation of nfe2l2/nrf2, a transcription factor regulating expression of many cytoprotective genes. In response to oxidative stress, different electrophile metabolites trigger non-enzymatic covalent modifications of highly reactive cysteine residues in KEAP1, leading to inactivate the ubiquitin ligase activity of the BCR(KEAP1) complex, promoting nfe2l2/nrf2 nuclear accumulation and expression of phase II detoxifying enzymes. This is Kelch-like ECH-associated protein 1A from Danio rerio (Zebrafish).